The chain runs to 373 residues: Enoyl-[acyl-carrier-protein] reductase, mitochondrial (373 aa).

The N-terminal 53 residues, 1-53 (MWVCGALCRTRAPAQLGQRLLPESRRRRPASASFSASAEPSRVRALVYGHHGD), are a transit peptide targeting the mitochondrion. Position 61 is an N6-acetyllysine; alternate (Lys61). Lys61 carries the N6-succinyllysine; alternate modification. The active-site Proton donor is the Tyr94. NADP(+)-binding positions include Asn167, 193 to 196 (NSGV), and 216 to 218 (RDT). N6-acetyllysine; alternate occurs at positions 252 and 267. Residues Lys252 and Lys267 each carry the N6-succinyllysine; alternate modification. NADP(+) is bound by residues 285–288 (YGGM) and 310–312 (FWL). N6-succinyllysine is present on Lys316. Residue Lys368 coordinates NADP(+).

Belongs to the zinc-containing alcohol dehydrogenase family. Quinone oxidoreductase subfamily. Homodimer.

It localises to the mitochondrion. The catalysed reaction is a 2,3-saturated acyl-[ACP] + NADP(+) = a (2E)-enoyl-[ACP] + NADPH + H(+). It catalyses the reaction (2E)-butenoyl-[ACP] + NADPH + H(+) = butanoyl-[ACP] + NADP(+). It carries out the reaction (2E)-hexenoyl-[ACP] + NADPH + H(+) = hexanoyl-[ACP] + NADP(+). The enzyme catalyses (2E)-octenoyl-[ACP] + NADPH + H(+) = octanoyl-[ACP] + NADP(+). The catalysed reaction is (2E)-decenoyl-[ACP] + NADPH + H(+) = decanoyl-[ACP] + NADP(+). It catalyses the reaction (2E)-dodecenoyl-[ACP] + NADPH + H(+) = dodecanoyl-[ACP] + NADP(+). It carries out the reaction (2E)-tetradecenoyl-[ACP] + NADPH + H(+) = tetradecanoyl-[ACP] + NADP(+). The enzyme catalyses (2E)-hexadecenoyl-[ACP] + NADPH + H(+) = hexadecanoyl-[ACP] + NADP(+). Functionally, catalyzes the NADPH-dependent reduction of trans-2-enoyl thioesters in mitochondrial fatty acid synthesis (fatty acid synthesis type II). Fatty acid chain elongation in mitochondria uses acyl carrier protein (ACP) as an acyl group carrier, but the enzyme accepts both ACP and CoA thioesters as substrates in vitro. Displays a preference for medium-chain over short- and long-chain substrates. May provide the octanoyl chain used for lipoic acid biosynthesis, regulating protein lipoylation and mitochondrial respiratory activity particularly in Purkinje cells. Involved in iron homeostasis; affecting Fe-S cluster assembly and ceramide metabolism. Required for proper morphology and bioenergetic functions of mitochondria. Required for maintenance of neurons. This chain is Enoyl-[acyl-carrier-protein] reductase, mitochondrial (MECR), found in Bos taurus (Bovine).